The chain runs to 257 residues: Imidazole glycerol phosphate synthase subunit HisF (257 aa).

Residues Asp11 and Asp130 contribute to the active site.

This sequence belongs to the HisA/HisF family. In terms of assembly, heterodimer of HisH and HisF.

The protein resides in the cytoplasm. The catalysed reaction is 5-[(5-phospho-1-deoxy-D-ribulos-1-ylimino)methylamino]-1-(5-phospho-beta-D-ribosyl)imidazole-4-carboxamide + L-glutamine = D-erythro-1-(imidazol-4-yl)glycerol 3-phosphate + 5-amino-1-(5-phospho-beta-D-ribosyl)imidazole-4-carboxamide + L-glutamate + H(+). It functions in the pathway amino-acid biosynthesis; L-histidine biosynthesis; L-histidine from 5-phospho-alpha-D-ribose 1-diphosphate: step 5/9. In terms of biological role, IGPS catalyzes the conversion of PRFAR and glutamine to IGP, AICAR and glutamate. The HisF subunit catalyzes the cyclization activity that produces IGP and AICAR from PRFAR using the ammonia provided by the HisH subunit. This chain is Imidazole glycerol phosphate synthase subunit HisF, found in Vibrio campbellii (strain ATCC BAA-1116).